Reading from the N-terminus, the 156-residue chain is Ribosomal RNA large subunit methyltransferase H (156 aa).

Residues leucine 73, glycine 104, and 123–128 (LSALTL) contribute to the S-adenosyl-L-methionine site.

The protein belongs to the RNA methyltransferase RlmH family. As to quaternary structure, homodimer.

Its subcellular location is the cytoplasm. The catalysed reaction is pseudouridine(1915) in 23S rRNA + S-adenosyl-L-methionine = N(3)-methylpseudouridine(1915) in 23S rRNA + S-adenosyl-L-homocysteine + H(+). Its function is as follows. Specifically methylates the pseudouridine at position 1915 (m3Psi1915) in 23S rRNA. This is Ribosomal RNA large subunit methyltransferase H from Vibrio vulnificus (strain CMCP6).